The chain runs to 297 residues: MFKGSIVALITPMDIKGNICKKSLKKLVKYHIKNKTNAIISVGTTGESATLNKNEHTNVIMHTLEYADEKIPIIAGTGSNATSESILLTKKLELSGISGCLNITPYYNKPTQEGLYLHFKSISESTDLPQILYNVPHRTGCDLLPQTIAKLAKFKNIIGLKDASGDLSRVNQIKSLVNKNFILISGDDTTALDFIQLGGNGVISVTANIAARHISKICKLALAGNFYKARKINEKLKILHNLLFKETNPIPIKWAAKYIGLIETDKIRLPMTQLLDKNKKNLKKIINLLQLNKNKFL.

T45 contributes to the pyruvate binding site. Catalysis depends on Y133, which acts as the Proton donor/acceptor. Catalysis depends on K161, which acts as the Schiff-base intermediate with substrate. I203 is a binding site for pyruvate.

This sequence belongs to the DapA family. Homotetramer; dimer of dimers.

It localises to the cytoplasm. The catalysed reaction is L-aspartate 4-semialdehyde + pyruvate = (2S,4S)-4-hydroxy-2,3,4,5-tetrahydrodipicolinate + H2O + H(+). The protein operates within amino-acid biosynthesis; L-lysine biosynthesis via DAP pathway; (S)-tetrahydrodipicolinate from L-aspartate: step 3/4. In terms of biological role, catalyzes the condensation of (S)-aspartate-beta-semialdehyde [(S)-ASA] and pyruvate to 4-hydroxy-tetrahydrodipicolinate (HTPA). The polypeptide is 4-hydroxy-tetrahydrodipicolinate synthase (Buchnera aphidicola subsp. Cinara cedri (strain Cc)).